A 634-amino-acid polypeptide reads, in one-letter code: MINITLPDGSRREFESPVSVMQVAQSIGAGLAKATIAGRVDGQLVDASDVIDHDASLRIITAKDAEGVEIIRHSCAHLVGHAVKQLYPEVKMVIGPVIAEGFYYDIYSERPFTPEDMAAIEQRMQALIAQDYDVIKKVTPRAEVIEVFAQRGEEYKLRLIDDMSDDITAMGLYYHQEYVDMCRGPHVPNTRFLKAFKLTRISGAYWRGDAKNEQLQRIYGTAWADKKQLDAYILRMEEADKRDHRRIGKAQDLFHLQEEAPGLVFWHPKGWSLWQVVEQYMRKVYRDSGYGEVRCPQILDVSLWQKSGHWDNYQDAMFFTESEKRTYAVKPMNCPGHVQVFNQGLHSYRDLPIRYGEFGACHRNEPSGALHGILRVRGFTQDDGHVFCLESQIESEVTAFHQQALAVYTAFGFDDIQIKIALRPEKRLGDDATWDKAEAALRSALGVCGVEWQELPGEGAFYGPKIEYHLKDAIGRTWQLGTMQVDFMMPGRLGAEYVDENSQKKHPVMLHRAIVGSMERFIGILIEHHAGAFPSWLAPVQVVVANITDAQADYVDAVRKTLANQGFRVSADLRNEKIGYKIREHTLQRVPYLLVVGDREKENGAVAVRTRSGEDLGTMTVSAFIERLQAEQAA.

Positions 1 to 61 (MINITLPDGS…DHDASLRIIT (61 aa)) constitute a TGS domain. Residues 243-534 (DHRRIGKAQD…LIEHHAGAFP (292 aa)) form a catalytic region. Positions 334, 385, and 511 each coordinate Zn(2+).

This sequence belongs to the class-II aminoacyl-tRNA synthetase family. As to quaternary structure, homodimer. Requires Zn(2+) as cofactor.

It is found in the cytoplasm. It carries out the reaction tRNA(Thr) + L-threonine + ATP = L-threonyl-tRNA(Thr) + AMP + diphosphate + H(+). Its function is as follows. Catalyzes the attachment of threonine to tRNA(Thr) in a two-step reaction: L-threonine is first activated by ATP to form Thr-AMP and then transferred to the acceptor end of tRNA(Thr). Also edits incorrectly charged L-seryl-tRNA(Thr). This Xanthomonas oryzae pv. oryzae (strain MAFF 311018) protein is Threonine--tRNA ligase.